We begin with the raw amino-acid sequence, 127 residues long: Fluoride-specific ion channel FluC (127 aa).

Transmembrane regions (helical) follow at residues Leu4–Gly24, Gly36–Ala56, Val72–Ile92, and Phe101–Val121. Na(+) is bound by residues Gly76 and Thr79.

The protein belongs to the fluoride channel Fluc/FEX (TC 1.A.43) family.

The protein resides in the cell inner membrane. The enzyme catalyses fluoride(in) = fluoride(out). With respect to regulation, na(+) is not transported, but it plays an essential structural role and its presence is essential for fluoride channel function. Fluoride-specific ion channel. Important for reducing fluoride concentration in the cell, thus reducing its toxicity. The chain is Fluoride-specific ion channel FluC from Caulobacter vibrioides (strain ATCC 19089 / CIP 103742 / CB 15) (Caulobacter crescentus).